A 434-amino-acid chain; its full sequence is Probable proline transporter 2 (434 aa).

The next 11 helical transmembrane spans lie at 26-46 (PWYQVGFVLTTGVNSAYVLGY), 49-69 (SVMVPLGWIGGTCGLILAAAI), 106-126 (LTWALQYVNLFMINTGFIILA), 149-169 (IALSGFVCALFAFGIPYLSAL), 171-191 (IWLGFSTFFSLIYITIAFVLS), 213-233 (IFTTIGAVANLVFAYNTGMLP), 251-271 (LWFQFTVGSLPLYAVTFMGYW), 297-317 (LSAFLQTVIALHIFASPMYEF), 339-359 (VGVRGGYLTVNTLVAAMLPFL), 362-382 (FMSLTGALSTFPLTFVLANHM), and 403-423 (VAGFSLLSIAAAVAALRLIMV).

Belongs to the amino acid/polyamine transporter 2 family. Amino acid/auxin permease (AAAP) (TC 2.A.18.3) subfamily.

It is found in the cell membrane. Functionally, proline transporter that mediates proline transport across the plasma membrane. This chain is Probable proline transporter 2, found in Oryza sativa subsp. japonica (Rice).